The chain runs to 401 residues: Imidazolonepropionase (401 aa).

The Fe(3+) site is built by H66 and H68. Positions 66 and 68 each coordinate Zn(2+). Residues R75, Y138, and H171 each coordinate 4-imidazolone-5-propanoate. Position 138 (Y138) interacts with N-formimidoyl-L-glutamate. H236 is a binding site for Fe(3+). Zn(2+) is bound at residue H236. 4-imidazolone-5-propanoate is bound at residue Q239. A Fe(3+)-binding site is contributed by D311. Residue D311 participates in Zn(2+) binding. N-formimidoyl-L-glutamate-binding residues include N313 and G315. Residue T316 participates in 4-imidazolone-5-propanoate binding.

This sequence belongs to the metallo-dependent hydrolases superfamily. HutI family. It depends on Zn(2+) as a cofactor. Requires Fe(3+) as cofactor.

The protein localises to the cytoplasm. It catalyses the reaction 4-imidazolone-5-propanoate + H2O = N-formimidoyl-L-glutamate. Its pathway is amino-acid degradation; L-histidine degradation into L-glutamate; N-formimidoyl-L-glutamate from L-histidine: step 3/3. Functionally, catalyzes the hydrolytic cleavage of the carbon-nitrogen bond in imidazolone-5-propanoate to yield N-formimidoyl-L-glutamate. It is the third step in the universal histidine degradation pathway. The protein is Imidazolonepropionase of Pseudomonas syringae pv. tomato (strain ATCC BAA-871 / DC3000).